A 231-amino-acid polypeptide reads, in one-letter code: Ferritin light chain (231 aa).

A signal peptide spans 1 to 19 (MKMLILAVSCLLAITGSLA). Cys23 and Cys43 are oxidised to a cystine. One can recognise a Ferritin-like diiron domain in the interval 50 to 208 (YGSHGNVATE…GHTSDLKKFI (159 aa)). The N-linked (GlcNAc...) asparagine glycan is linked to Asn134.

It belongs to the ferritin family. Oligomer of 12 light (L) chains and 12 heavy (H) chains; L and H chains are disulfide-linked. The functional molecule forms a roughly spherical shell with a diameter of 12 nm and contains a central cavity into which the insoluble ferric iron core is deposited.

Its subcellular location is the golgi apparatus. The protein resides in the secreted. In terms of biological role, stores iron in a soluble, non-toxic, readily available form. Important for iron homeostasis. Iron is taken up in the ferrous form and deposited as ferric hydroxides after oxidation. Ferritin is composed of a heavy (H) chain which is responsible for the oxidation and uptake of ferrous iron, and a light (L) chain which facilitates the nucleation of the ferrihydrite iron core. The chain is Ferritin light chain from Trichoplusia ni (Cabbage looper).